Here is an 84-residue protein sequence, read N- to C-terminus: Sec-independent protein translocase protein TatA (84 aa).

Residues 4-24 (MSPVHWLILAVVLLVVFGGGG) traverse the membrane as a helical segment. The tract at residues 46 to 84 (DDESMTATDATQAPGHISPPNQNPGYSQTTSSETHRNQV) is disordered. Polar residues predominate over residues 64–77 (PPNQNPGYSQTTSS).

Belongs to the TatA/E family. The Tat system comprises two distinct complexes: a TatABC complex, containing multiple copies of TatA, TatB and TatC subunits, and a separate TatA complex, containing only TatA subunits. Substrates initially bind to the TatABC complex, which probably triggers association of the separate TatA complex to form the active translocon.

The protein resides in the cell inner membrane. Functionally, part of the twin-arginine translocation (Tat) system that transports large folded proteins containing a characteristic twin-arginine motif in their signal peptide across membranes. TatA could form the protein-conducting channel of the Tat system. The protein is Sec-independent protein translocase protein TatA of Gluconobacter oxydans (strain 621H) (Gluconobacter suboxydans).